The chain runs to 101 residues: Small ribosomal subunit protein uS14 (101 aa).

Belongs to the universal ribosomal protein uS14 family. Part of the 30S ribosomal subunit. Contacts proteins S3 and S10.

Its function is as follows. Binds 16S rRNA, required for the assembly of 30S particles and may also be responsible for determining the conformation of the 16S rRNA at the A site. The sequence is that of Small ribosomal subunit protein uS14 from Pseudomonas syringae pv. syringae (strain B728a).